The primary structure comprises 512 residues: D-alanine--D-alanyl carrier protein ligase (512 aa).

152 to 153 (TS) lines the ATP pocket. A D-alanine-binding site is contributed by Asp-199. 294 to 299 (NAYGPT) contributes to the ATP binding site. Val-303 is a binding site for D-alanine. ATP is bound by residues Asp-385, 397 to 400 (YGGR), and Lys-499. Lys-499 is a binding site for D-alanine.

The protein belongs to the ATP-dependent AMP-binding enzyme family. DltA subfamily.

Its subcellular location is the cytoplasm. It catalyses the reaction holo-[D-alanyl-carrier protein] + D-alanine + ATP = D-alanyl-[D-alanyl-carrier protein] + AMP + diphosphate. It functions in the pathway cell wall biogenesis; lipoteichoic acid biosynthesis. Catalyzes the first step in the D-alanylation of lipoteichoic acid (LTA), the activation of D-alanine and its transfer onto the D-alanyl carrier protein (Dcp) DltC. In an ATP-dependent two-step reaction, forms a high energy D-alanyl-AMP intermediate, followed by transfer of the D-alanyl residue as a thiol ester to the phosphopantheinyl prosthetic group of the Dcp. D-alanylation of LTA plays an important role in modulating the properties of the cell wall in Gram-positive bacteria, influencing the net charge of the cell wall. The polypeptide is D-alanine--D-alanyl carrier protein ligase (Streptococcus pyogenes serotype M49 (strain NZ131)).